A 167-amino-acid polypeptide reads, in one-letter code: Small ribosomal subunit protein uS5 (167 aa).

The S5 DRBM domain maps to 11 to 74; that stretch reads LQEKLIAVNR…EKARRNMINV (64 aa).

This sequence belongs to the universal ribosomal protein uS5 family. As to quaternary structure, part of the 30S ribosomal subunit. Contacts proteins S4 and S8.

Functionally, with S4 and S12 plays an important role in translational accuracy. In terms of biological role, located at the back of the 30S subunit body where it stabilizes the conformation of the head with respect to the body. This chain is Small ribosomal subunit protein uS5, found in Shigella dysenteriae serotype 1 (strain Sd197).